We begin with the raw amino-acid sequence, 214 residues long: Adenylate kinase (214 aa).

10 to 15 (GAGKGT) provides a ligand contact to ATP. An NMP region spans residues 30–59 (STGDMLRAAIKAGTELGKQAKSVIDAGQLV). Residues threonine 31, arginine 36, 57 to 59 (QLV), 85 to 88 (GFPR), and glutamine 92 contribute to the AMP site. The tract at residues 122–159 (GRRAHLPSGRTYHVVYNPPKEEGKDDETGEPLVIREDD) is LID. ATP contacts are provided by residues arginine 123 and 132–133 (TY). Positions 156 and 167 each coordinate AMP. Position 200 (lysine 200) interacts with ATP.

Belongs to the adenylate kinase family. As to quaternary structure, monomer.

Its subcellular location is the cytoplasm. It carries out the reaction AMP + ATP = 2 ADP. It functions in the pathway purine metabolism; AMP biosynthesis via salvage pathway; AMP from ADP: step 1/1. Catalyzes the reversible transfer of the terminal phosphate group between ATP and AMP. Plays an important role in cellular energy homeostasis and in adenine nucleotide metabolism. This is Adenylate kinase from Aliivibrio fischeri (strain ATCC 700601 / ES114) (Vibrio fischeri).